The primary structure comprises 179 residues: Protein GrpE (179 aa).

The protein belongs to the GrpE family. Homodimer.

It localises to the cytoplasm. In terms of biological role, participates actively in the response to hyperosmotic and heat shock by preventing the aggregation of stress-denatured proteins, in association with DnaK and GrpE. It is the nucleotide exchange factor for DnaK and may function as a thermosensor. Unfolded proteins bind initially to DnaJ; upon interaction with the DnaJ-bound protein, DnaK hydrolyzes its bound ATP, resulting in the formation of a stable complex. GrpE releases ADP from DnaK; ATP binding to DnaK triggers the release of the substrate protein, thus completing the reaction cycle. Several rounds of ATP-dependent interactions between DnaJ, DnaK and GrpE are required for fully efficient folding. The sequence is that of Protein GrpE from Rickettsia felis (strain ATCC VR-1525 / URRWXCal2) (Rickettsia azadi).